A 273-amino-acid polypeptide reads, in one-letter code: NADPH-dependent 7-cyano-7-deazaguanine reductase (273 aa).

81 to 83 (VES) serves as a coordination point for substrate. Residue 83-84 (SK) coordinates NADPH. Cysteine 179 serves as the catalytic Thioimide intermediate. The active-site Proton donor is aspartate 186. 218 to 219 (AE) is a substrate binding site. 247-248 (RG) lines the NADPH pocket.

Belongs to the GTP cyclohydrolase I family. QueF type 2 subfamily. As to quaternary structure, homodimer.

It localises to the cytoplasm. The catalysed reaction is 7-aminomethyl-7-carbaguanine + 2 NADP(+) = 7-cyano-7-deazaguanine + 2 NADPH + 3 H(+). It functions in the pathway tRNA modification; tRNA-queuosine biosynthesis. Its function is as follows. Catalyzes the NADPH-dependent reduction of 7-cyano-7-deazaguanine (preQ0) to 7-aminomethyl-7-deazaguanine (preQ1). The chain is NADPH-dependent 7-cyano-7-deazaguanine reductase from Rickettsia canadensis (strain McKiel).